An 88-amino-acid chain; its full sequence is uncharacterized protein (88 aa).

This is an uncharacterized protein from Bacillus subtilis (strain 168).